The chain runs to 186 residues: Napin embryo-specific (186 aa).

Positions 1 to 21 (MANKLFLVSATLALFFLLTNA) are cleaved as a signal peptide. 2 propeptides span residues 22–38 (SVYR…ATNP) and 77–97 (PSWT…QQQG).

This sequence belongs to the 2S seed storage albumins family. In terms of assembly, the mature protein consists of a small and a large chain linked by disulfide bonds. Cotyledons and the axis.

The small, basic, water-soluble napins are one of the two major kinds of storage proteins synthesized in the seed during its maturation. This Brassica napus (Rape) protein is Napin embryo-specific.